Consider the following 187-residue polypeptide: ATP synthase subunit b, chloroplastic (187 aa).

A helical membrane pass occupies residues 34 to 56 (LINLAAVIGLLFYSGRSFLTNLL).

Belongs to the ATPase B chain family. F-type ATPases have 2 components, F(1) - the catalytic core - and F(0) - the membrane proton channel. F(1) has five subunits: alpha(3), beta(3), gamma(1), delta(1), epsilon(1). F(0) has four main subunits: a(1), b(1), b'(1) and c(10-14). The alpha and beta chains form an alternating ring which encloses part of the gamma chain. F(1) is attached to F(0) by a central stalk formed by the gamma and epsilon chains, while a peripheral stalk is formed by the delta, b and b' chains.

It is found in the plastid. The protein resides in the chloroplast thylakoid membrane. Functionally, f(1)F(0) ATP synthase produces ATP from ADP in the presence of a proton or sodium gradient. F-type ATPases consist of two structural domains, F(1) containing the extramembraneous catalytic core and F(0) containing the membrane proton channel, linked together by a central stalk and a peripheral stalk. During catalysis, ATP synthesis in the catalytic domain of F(1) is coupled via a rotary mechanism of the central stalk subunits to proton translocation. Component of the F(0) channel, it forms part of the peripheral stalk, linking F(1) to F(0). This is ATP synthase subunit b, chloroplastic from Chlorokybus atmophyticus (Soil alga).